Reading from the N-terminus, the 309-residue chain is Ribonuclease Z (309 aa).

Zn(2+) contacts are provided by H63, H65, D67, H68, H145, D216, and H274. The active-site Proton acceptor is D67.

This sequence belongs to the RNase Z family. Homodimer. The cofactor is Zn(2+).

The catalysed reaction is Endonucleolytic cleavage of RNA, removing extra 3' nucleotides from tRNA precursor, generating 3' termini of tRNAs. A 3'-hydroxy group is left at the tRNA terminus and a 5'-phosphoryl group is left at the trailer molecule.. Its function is as follows. Zinc phosphodiesterase, which displays some tRNA 3'-processing endonuclease activity. Probably involved in tRNA maturation, by removing a 3'-trailer from precursor tRNA. This is Ribonuclease Z from Streptococcus pneumoniae serotype 2 (strain D39 / NCTC 7466).